The primary structure comprises 228 residues: Endo-1,4-beta-xylanase A (228 aa).

An N-terminal signal peptide occupies residues 1 to 27 (MNLRKLRLLFVMCIGLTLILTAVPAHA). A GH11 domain is found at 29–222 (TITNNEMGNH…SSGSANVMTN (194 aa)). The Nucleophile role is filled by E120. E209 serves as the catalytic Proton donor.

Belongs to the glycosyl hydrolase 11 (cellulase G) family.

The catalysed reaction is Endohydrolysis of (1-&gt;4)-beta-D-xylosidic linkages in xylans.. The protein operates within glycan degradation; xylan degradation. This chain is Endo-1,4-beta-xylanase A (xynA), found in Bacillus pumilus (Bacillus mesentericus).